The primary structure comprises 179 residues: UPF0316 protein BH0621 (179 aa).

3 helical membrane-spanning segments follow: residues 9 to 29 (ALTM…LFTV), 41 to 61 (LAAT…SLVL), and 67 to 87 (IENL…GMKV).

Belongs to the UPF0316 family.

It localises to the cell membrane. The chain is UPF0316 protein BH0621 from Halalkalibacterium halodurans (strain ATCC BAA-125 / DSM 18197 / FERM 7344 / JCM 9153 / C-125) (Bacillus halodurans).